The sequence spans 561 residues: DNA ligase B (561 aa).

The N6-AMP-lysine intermediate role is filled by Lys-125.

The protein belongs to the NAD-dependent DNA ligase family. LigB subfamily.

It carries out the reaction NAD(+) + (deoxyribonucleotide)n-3'-hydroxyl + 5'-phospho-(deoxyribonucleotide)m = (deoxyribonucleotide)n+m + AMP + beta-nicotinamide D-nucleotide.. Its function is as follows. Catalyzes the formation of phosphodiester linkages between 5'-phosphoryl and 3'-hydroxyl groups in double-stranded DNA using NAD as a coenzyme and as the energy source for the reaction. This is DNA ligase B from Salmonella dublin (strain CT_02021853).